The primary structure comprises 662 residues: UvrABC system protein B (662 aa).

The Helicase ATP-binding domain occupies 25 to 182; that stretch reads KGIEKGEKFQ…KKLVEIQYER (158 aa). 38-45 contacts ATP; sequence GVTGSGKT. A Beta-hairpin motif is present at residues 91-114; sequence YYDYYQPEAYVAQSDTYIEKDASI. The 167-residue stretch at 429 to 595 folds into the Helicase C-terminal domain; it reads QIDDLYTSIQ…TIIKDIREVI (167 aa). In terms of domain architecture, UVR spans 622-657; sequence DKLIEKYEEEMREAAQNLQFEKAAHLRDVIYKLKRD.

Belongs to the UvrB family. Forms a heterotetramer with UvrA during the search for lesions. Interacts with UvrC in an incision complex.

It is found in the cytoplasm. In terms of biological role, the UvrABC repair system catalyzes the recognition and processing of DNA lesions. A damage recognition complex composed of 2 UvrA and 2 UvrB subunits scans DNA for abnormalities. Upon binding of the UvrA(2)B(2) complex to a putative damaged site, the DNA wraps around one UvrB monomer. DNA wrap is dependent on ATP binding by UvrB and probably causes local melting of the DNA helix, facilitating insertion of UvrB beta-hairpin between the DNA strands. Then UvrB probes one DNA strand for the presence of a lesion. If a lesion is found the UvrA subunits dissociate and the UvrB-DNA preincision complex is formed. This complex is subsequently bound by UvrC and the second UvrB is released. If no lesion is found, the DNA wraps around the other UvrB subunit that will check the other stand for damage. In Clostridium botulinum (strain 657 / Type Ba4), this protein is UvrABC system protein B.